We begin with the raw amino-acid sequence, 908 residues long: Protein translocase subunit SecA (908 aa).

Residues Gln-87, 105 to 109, and Asp-512 each bind ATP; that span reads GEGKT. A disordered region spans residues 865–908; it reads GGDDGSDEMMAHTPMIRDGDKVGRNDPCPCGSGRKYKQCHGKLS. Positions 879-888 are enriched in basic and acidic residues; that stretch reads MIRDGDKVGR. Cys-892, Cys-894, Cys-903, and His-904 together coordinate Zn(2+). Residues 898–908 are compositionally biased toward basic residues; sequence RKYKQCHGKLS.

Belongs to the SecA family. In terms of assembly, monomer and homodimer. Part of the essential Sec protein translocation apparatus which comprises SecA, SecYEG and auxiliary proteins SecDF-YajC and YidC. The cofactor is Zn(2+).

It localises to the cell inner membrane. Its subcellular location is the cytoplasm. It catalyses the reaction ATP + H2O + cellular proteinSide 1 = ADP + phosphate + cellular proteinSide 2.. Part of the Sec protein translocase complex. Interacts with the SecYEG preprotein conducting channel. Has a central role in coupling the hydrolysis of ATP to the transfer of proteins into and across the cell membrane, serving both as a receptor for the preprotein-SecB complex and as an ATP-driven molecular motor driving the stepwise translocation of polypeptide chains across the membrane. The chain is Protein translocase subunit SecA from Shewanella sp. (strain MR-4).